The following is a 159-amino-acid chain: Large ribosomal subunit protein uL23m (159 aa).

This sequence belongs to the universal ribosomal protein uL23 family. In terms of assembly, component of the mitochondrial ribosome large subunit (39S) which comprises a 16S rRNA and about 50 distinct proteins.

Its subcellular location is the mitochondrion. This is Large ribosomal subunit protein uL23m (mrpl-23) from Caenorhabditis elegans.